The chain runs to 552 residues: FERRY endosomal RAB5 effector complex subunit 3 (552 aa).

S79 carries the post-translational modification Phosphoserine.

As to quaternary structure, component of the FERRY complex composed of five subunits, TBCK, PPP1R21, FERRY3, CRYZL1 and GATD1 with a ratio of 1:2:1:2:4, respectively.

It is found in the cytoplasm. It localises to the early endosome. Functionally, component of the FERRY complex (Five-subunit Endosomal Rab5 and RNA/ribosome intermediary). The FERRY complex directly interacts with mRNAs and RAB5A, and functions as a RAB5A effector involved in the localization and the distribution of specific mRNAs most likely by mediating their endosomal transport. The complex recruits mRNAs and ribosomes to early endosomes through direct mRNA-interaction. Plays a role in mast cell degranulation. This chain is FERRY endosomal RAB5 effector complex subunit 3, found in Mus musculus (Mouse).